Here is a 207-residue protein sequence, read N- to C-terminus: Probable RNA 2'-phosphotransferase (207 aa).

This sequence belongs to the KptA/TPT1 family.

Its function is as follows. Removes the 2'-phosphate from RNA via an intermediate in which the phosphate is ADP-ribosylated by NAD followed by a presumed transesterification to release the RNA and generate ADP-ribose 1''-2''-cyclic phosphate (APPR&gt;P). May function as an ADP-ribosylase. This chain is Probable RNA 2'-phosphotransferase, found in Methanosarcina mazei (strain ATCC BAA-159 / DSM 3647 / Goe1 / Go1 / JCM 11833 / OCM 88) (Methanosarcina frisia).